The following is a 454-amino-acid chain: Bifunctional protein GlmU (454 aa).

Positions 1–226 (MLAVAVLAAG…PDEVNGINNR (226 aa)) are pyrophosphorylase. Residues 7-10 (LAAG), K21, Q73, and 78-79 (GT) contribute to the UDP-N-acetyl-alpha-D-glucosamine site. Position 103 (D103) interacts with Mg(2+). Residues G140, E155, N170, and N224 each contribute to the UDP-N-acetyl-alpha-D-glucosamine site. Residue N224 coordinates Mg(2+). A linker region spans residues 227–247 (RQLAQCEGVLQQRLRDHWMDE). The N-acetyltransferase stretch occupies residues 248–454 (GVTFVDPASC…WDRNTQAAQS (207 aa)). Positions 329 and 347 each coordinate UDP-N-acetyl-alpha-D-glucosamine. H359 functions as the Proton acceptor in the catalytic mechanism. UDP-N-acetyl-alpha-D-glucosamine-binding residues include Y362 and N373. Positions 376, 419, and 436 each coordinate acetyl-CoA.

The protein in the N-terminal section; belongs to the N-acetylglucosamine-1-phosphate uridyltransferase family. In the C-terminal section; belongs to the transferase hexapeptide repeat family. As to quaternary structure, homotrimer. It depends on Mg(2+) as a cofactor.

The protein localises to the cytoplasm. The catalysed reaction is alpha-D-glucosamine 1-phosphate + acetyl-CoA = N-acetyl-alpha-D-glucosamine 1-phosphate + CoA + H(+). The enzyme catalyses N-acetyl-alpha-D-glucosamine 1-phosphate + UTP + H(+) = UDP-N-acetyl-alpha-D-glucosamine + diphosphate. It functions in the pathway nucleotide-sugar biosynthesis; UDP-N-acetyl-alpha-D-glucosamine biosynthesis; N-acetyl-alpha-D-glucosamine 1-phosphate from alpha-D-glucosamine 6-phosphate (route II): step 2/2. It participates in nucleotide-sugar biosynthesis; UDP-N-acetyl-alpha-D-glucosamine biosynthesis; UDP-N-acetyl-alpha-D-glucosamine from N-acetyl-alpha-D-glucosamine 1-phosphate: step 1/1. The protein operates within bacterial outer membrane biogenesis; LPS lipid A biosynthesis. Its function is as follows. Catalyzes the last two sequential reactions in the de novo biosynthetic pathway for UDP-N-acetylglucosamine (UDP-GlcNAc). The C-terminal domain catalyzes the transfer of acetyl group from acetyl coenzyme A to glucosamine-1-phosphate (GlcN-1-P) to produce N-acetylglucosamine-1-phosphate (GlcNAc-1-P), which is converted into UDP-GlcNAc by the transfer of uridine 5-monophosphate (from uridine 5-triphosphate), a reaction catalyzed by the N-terminal domain. The polypeptide is Bifunctional protein GlmU (Synechococcus sp. (strain CC9311)).